The chain runs to 949 residues: MAM domain-containing glycosylphosphatidylinositol anchor protein 1 (949 aa).

A signal peptide spans 1–18 (MEMICVLFLSLVPAYSRG). Ig-like domains are found at residues 24–125 (PAQA…IRVD) and 132–230 (PVLT…KSIT). N-linked (GlcNAc...) asparagine glycosylation is found at Asn42 and Asn90. Intrachain disulfides connect Cys60-Cys108 and Cys157-Cys214. Asn235, Asn247, Asn257, Asn292, Asn307, and Asn331 each carry an N-linked (GlcNAc...) asparagine glycan. The region spanning 240–323 (PALKLSVNET…VGNPAKKTVN (84 aa)) is the Ig-like 3 domain. Cys262 and Cys308 are joined by a disulfide. 3 consecutive Ig-like domains span residues 338–432 (PDVI…VEVN), 440–531 (PTIS…ALVQ), and 537–625 (PPVV…FQVS). An intrachain disulfide couples Cys357 to Cys415. N-linked (GlcNAc...) asparagine glycosylation occurs at Asn432. Disulfide bonds link Cys463/Cys513 and Cys559/Cys609. N-linked (GlcNAc...) asparagine glycosylation is found at Asn577, Asn649, and Asn820. Residues 637–737 (TPNPTLSQKQ…ARIIRYMEPI (101 aa)) enclose the Fibronectin type-III domain. In terms of domain architecture, MAM spans 745-912 (NTCRFEDEKI…VTLKKGDCPR (168 aa)). Ser926 is lipidated: GPI-anchor amidated serine. The propeptide at 927-949 (GVSAQHGPCLCGPLTFFLYVLLR) is removed in mature form.

In terms of assembly, interacts heterophilically through its MAM domain with proteins in axon-rich regions and through its Ig-like domains with proteins in differentiating muscle. In the embryonic brachial spinal cord, selectively expressed by medial lateral motor column neurons, some populations of dorsal root ganglion neurons, and interneurons.

The protein localises to the cell membrane. Functionally, required for radial migration of cortical neurons in the superficial layer of the neocortex. The sequence is that of MAM domain-containing glycosylphosphatidylinositol anchor protein 1 from Gallus gallus (Chicken).